A 1026-amino-acid polypeptide reads, in one-letter code: uncharacterized protein (1026 aa).

WD repeat units lie at residues 14–53, 62–104, 148–187, and 937–977; these read LLDE…HFTL, HSVS…RRAT, GHED…LTFK, and NAEC…VKFL.

Its subcellular location is the cytoplasm. It is found in the nucleus. This is an uncharacterized protein from Schizosaccharomyces pombe (strain 972 / ATCC 24843) (Fission yeast).